Consider the following 383-residue polypeptide: MDLYEHQGKELLGRFGLRTLPGVVATTPEEARRAAERLGGTVAVKAQVLTGGRGKAGGIKVAESPEEAEEAARRILGMDIRGHTVRRLLIESGADIERELYLSAMVDRESRRPLILFSTEGGVDIEEVAERSPGSIVRLHVDPLVGLLPYQVRELTFASGLSGETAKDFGRAVQNLYEAFRGIDASLVEINPLVVTGEGEVVALDAKVTVDNSSLYRHQEIAGWRDVEAADPQEHRAQEVGLQYVKLDGDVGILGNGAGLVMSTLDVVAQAGGRPANFCDVGGGADAEKIATALEIVASNENVRSVFFNIFGGITRGDEVARGLLAAIRKTGIDLPVVVRLDGTNAEEGLRLLAEGAPENVHTEETMLDAARRAVELARDGGH.

Residues lysine 9 to arginine 236 form the ATP-grasp domain. Residues lysine 45, glycine 52–glycine 54, glutamate 91, alanine 94, and glutamate 99 each bind ATP. Positions 191 and 205 each coordinate Mg(2+). Substrate-binding positions include asparagine 256 and glycine 313–threonine 315.

This sequence belongs to the succinate/malate CoA ligase beta subunit family. As to quaternary structure, heterotetramer of two alpha and two beta subunits. Mg(2+) serves as cofactor.

It catalyses the reaction succinate + ATP + CoA = succinyl-CoA + ADP + phosphate. The catalysed reaction is GTP + succinate + CoA = succinyl-CoA + GDP + phosphate. Its pathway is carbohydrate metabolism; tricarboxylic acid cycle; succinate from succinyl-CoA (ligase route): step 1/1. Its function is as follows. Succinyl-CoA synthetase functions in the citric acid cycle (TCA), coupling the hydrolysis of succinyl-CoA to the synthesis of either ATP or GTP and thus represents the only step of substrate-level phosphorylation in the TCA. The beta subunit provides nucleotide specificity of the enzyme and binds the substrate succinate, while the binding sites for coenzyme A and phosphate are found in the alpha subunit. This is Succinate--CoA ligase [ADP-forming] subunit beta from Rubrobacter xylanophilus (strain DSM 9941 / JCM 11954 / NBRC 16129 / PRD-1).